Reading from the N-terminus, the 288-residue chain is Quinate/shikimate dehydrogenase (288 aa).

The substrate site is built by lysine 71 and aspartate 107. Residues 132–135, 155–158, lysine 205, 232–235, and glycine 255 each bind NAD(+); these read AGGA, NRRD, and CVYN.

Belongs to the shikimate dehydrogenase family. Homodimer.

The catalysed reaction is L-quinate + NAD(+) = 3-dehydroquinate + NADH + H(+). It carries out the reaction L-quinate + NADP(+) = 3-dehydroquinate + NADPH + H(+). It catalyses the reaction shikimate + NADP(+) = 3-dehydroshikimate + NADPH + H(+). The enzyme catalyses shikimate + NAD(+) = 3-dehydroshikimate + NADH + H(+). Its pathway is metabolic intermediate biosynthesis; chorismate biosynthesis; chorismate from D-erythrose 4-phosphate and phosphoenolpyruvate: step 4/7. Its function is as follows. The actual biological function of YdiB remains unclear, nor is it known whether 3-dehydroshikimate or quinate represents the natural substrate. Catalyzes the reversible NAD-dependent reduction of both 3-dehydroshikimate (DHSA) and 3-dehydroquinate to yield shikimate (SA) and quinate, respectively. It can use both NAD or NADP for catalysis, however it has higher catalytic efficiency with NAD. The sequence is that of Quinate/shikimate dehydrogenase from Shigella sonnei (strain Ss046).